The chain runs to 123 residues: Large ribosomal subunit protein bL12 (123 aa).

This sequence belongs to the bacterial ribosomal protein bL12 family. Homodimer. Part of the ribosomal stalk of the 50S ribosomal subunit. Forms a multimeric L10(L12)X complex, where L10 forms an elongated spine to which 2 to 4 L12 dimers bind in a sequential fashion. Binds GTP-bound translation factors.

In terms of biological role, forms part of the ribosomal stalk which helps the ribosome interact with GTP-bound translation factors. Is thus essential for accurate translation. This Borrelia turicatae (strain 91E135) protein is Large ribosomal subunit protein bL12.